Consider the following 156-residue polypeptide: Small ribosomal subunit protein uS7cz/uS7cy (156 aa).

It belongs to the universal ribosomal protein uS7 family. In terms of assembly, part of the 30S ribosomal subunit.

It is found in the plastid. It localises to the chloroplast. Functionally, one of the primary rRNA binding proteins, it binds directly to 16S rRNA where it nucleates assembly of the head domain of the 30S subunit. In Saccharum hybrid (Sugarcane), this protein is Small ribosomal subunit protein uS7cz/uS7cy (rps7-A).